We begin with the raw amino-acid sequence, 129 residues long: ATP synthase epsilon chain (129 aa).

It belongs to the ATPase epsilon chain family. F-type ATPases have 2 components, CF(1) - the catalytic core - and CF(0) - the membrane proton channel. CF(1) has five subunits: alpha(3), beta(3), gamma(1), delta(1), epsilon(1). CF(0) has three main subunits: a, b and c.

It localises to the cell inner membrane. Its function is as follows. Produces ATP from ADP in the presence of a proton gradient across the membrane. This is ATP synthase epsilon chain from Campylobacter fetus subsp. fetus (strain 82-40).